An 82-amino-acid polypeptide reads, in one-letter code: Small ribosomal subunit protein bS16 (82 aa).

It belongs to the bacterial ribosomal protein bS16 family.

The polypeptide is Small ribosomal subunit protein bS16 (Synechococcus elongatus (strain ATCC 33912 / PCC 7942 / FACHB-805) (Anacystis nidulans R2)).